A 291-amino-acid polypeptide reads, in one-letter code: Beta-lactamase CTX-M-97 (291 aa).

Positions 1 to 28 are cleaved as a signal peptide; that stretch reads MMTQSIGRSMLTVMATLPLLFSSATLHA. Catalysis depends on Ser73, which acts as the Acyl-ester intermediate. 237-239 contributes to the substrate binding site; that stretch reads KTG.

It belongs to the class-A beta-lactamase family.

The enzyme catalyses a beta-lactam + H2O = a substituted beta-amino acid. Functionally, is probably capable of hydrolyzing cephalosporins such as ceftriaxone and ceftazidime, thus conferring resistance to these antibiotics. This Escherichia coli protein is Beta-lactamase CTX-M-97 (bla).